The chain runs to 576 residues: DM7 family protein GD16138 (576 aa).

Residues 454-481 (FPELEPDSEPEPEPEPQTEDEGEDEGDK) form a disordered region. A compositionally biased stretch (acidic residues) spans 457–478 (LEPDSEPEPEPEPQTEDEGEDE).

Belongs to the DM7 family.

The protein is DM7 family protein GD16138 of Drosophila simulans (Fruit fly).